Here is a 617-residue protein sequence, read N- to C-terminus: Leucine aminopeptidase 2 (617 aa).

A peptide contacts are provided by residues 139 to 141 and 271 to 276; these read QCQ and PYGGME. His300 contributes to the Zn(2+) binding site. The active-site Proton acceptor is Glu301. Residues His304 and Glu323 each contribute to the Zn(2+) site. Catalysis depends on Tyr388, which acts as the Proton donor.

Belongs to the peptidase M1 family. Zn(2+) serves as cofactor.

It localises to the cytoplasm. It is found in the nucleus. It catalyses the reaction an epoxide + H2O = an ethanediol. Functionally, aminopeptidase that preferentially cleaves di- and tripeptides. Also has low epoxide hydrolase activity (in vitro). Can hydrolyze the epoxide leukotriene LTA(4) but it forms preferentially 5,6-dihydroxy-7,9,11,14-eicosatetraenoic acid rather than the cytokine leukotriene B(4) as the product compared to the homologous mammalian enzyme (in vitro). The chain is Leucine aminopeptidase 2 from Aspergillus terreus (strain NIH 2624 / FGSC A1156).